We begin with the raw amino-acid sequence, 518 residues long: Macrophage receptor MARCO (518 aa).

Residues 1–48 (MGSKELLKEEDFLGSTEDRADFDQAMFPVMETFEINDPVPKKRNGGTF) are Cytoplasmic-facing. Residues 49 to 69 (CMAVMAIHLILLTAGTALLLI) form a helical; Signal-anchor for type II membrane protein membrane-spanning segment. The Extracellular segment spans residues 70–518 (QVLNLQEQLQ…HNEDAGVECS (449 aa)). N-linked (GlcNAc...) asparagine glycosylation is found at asparagine 87 and asparagine 138. Residues 147–426 (QIKGERGSPG…GESFQRVRIM (280 aa)) are disordered. Positions 149–418 (KGERGSPGPK…QKGEKGQKGE (270 aa)) constitute a Collagen-like domain. Residues 154–163 (SPGPKGAPGA) show a composition bias toward low complexity. Over residues 239-250 (KGEHGTKGDKGD) the composition is skewed to basic and acidic residues. 2 stretches are compositionally biased toward low complexity: residues 293–314 (PGVKGDQGKPGVQGVPGPQGAP) and 325–344 (RTGLPGPAGPPGIAGNPGIA). A compositionally biased stretch (basic and acidic residues) spans 410 to 421 (KGEKGQKGESFQ). The SRCR domain occupies 423–518 (VRIMGGTNRG…HNEDAGVECS (96 aa)). Disulfide bonds link cysteine 446–cysteine 507, cysteine 459–cysteine 517, and cysteine 487–cysteine 497.

Homotrimer; disulfide-linked. Trimers may assemble in larger oligomers thus resulting in the creation of a large surface capable of interacting with very large ligands. In terms of processing, N-glycosylated. Expressed in subpopulations of macrophages in the spleen and the medullary cord of lymph nodes (at protein level).

The protein localises to the cell membrane. Pattern recognition receptor (PRR) which binds Gram-positive and Gram-negative bacteria. Also plays a role in binding of unopsonized particles by alveolar macrophages. Binds to the secretoglobin SCGB3A2. This chain is Macrophage receptor MARCO (Marco), found in Mus musculus (Mouse).